The primary structure comprises 337 residues: Glyceraldehyde-3-phosphate dehydrogenase 2, cytosolic (337 aa).

Positions 1–151 (MGKIKIGING…YTSDVNIVSN (151 aa)) are binding to NAD. NAD(+) is bound by residues 13–14 (RI), aspartate 35, and arginine 82. Positions 152-337 (ASCTTNCLAP…DLIRHMFKTQ (186 aa)) are catalytic. Residues 153-155 (SCT), threonine 184, 213-214 (TG), and arginine 236 contribute to the D-glyceraldehyde 3-phosphate site. Cysteine 154 functions as the Nucleophile in the catalytic mechanism. Asparagine 318 serves as a coordination point for NAD(+).

Belongs to the glyceraldehyde-3-phosphate dehydrogenase family. As to quaternary structure, homotetramer. Developing seeds, seedling roots and shoots, and embryo.

The protein localises to the cytoplasm. It carries out the reaction D-glyceraldehyde 3-phosphate + phosphate + NAD(+) = (2R)-3-phospho-glyceroyl phosphate + NADH + H(+). The protein operates within carbohydrate degradation; glycolysis; pyruvate from D-glyceraldehyde 3-phosphate: step 1/5. In terms of biological role, key enzyme in glycolysis that catalyzes the first step of the pathway by converting D-glyceraldehyde 3-phosphate (G3P) into 3-phospho-D-glyceroyl phosphate. Essential for the maintenance of cellular ATP levels and carbohydrate metabolism. In Zea mays (Maize), this protein is Glyceraldehyde-3-phosphate dehydrogenase 2, cytosolic (GAPC2).